We begin with the raw amino-acid sequence, 139 residues long: Acidic phospholipase A2 Ts-A4 (139 aa).

An N-terminal signal peptide occupies residues Met1–Gly16. Intrachain disulfides connect Cys42-Cys132, Cys44-Cys60, Cys59-Cys111, Cys65-Cys139, Cys66-Cys104, Cys73-Cys97, and Cys91-Cys102. Positions 43, 45, and 47 each coordinate Ca(2+). Residue His63 is part of the active site. Asp64 is a Ca(2+) binding site. Asp105 is a catalytic residue.

It depends on Ca(2+) as a cofactor. As to expression, expressed by the venom gland.

The protein resides in the secreted. It carries out the reaction a 1,2-diacyl-sn-glycero-3-phosphocholine + H2O = a 1-acyl-sn-glycero-3-phosphocholine + a fatty acid + H(+). In terms of biological role, PLA2 catalyzes the calcium-dependent hydrolysis of the 2-acyl groups in 3-sn-phosphoglycerides. In Trimeresurus stejnegeri (Chinese green tree viper), this protein is Acidic phospholipase A2 Ts-A4.